A 458-amino-acid chain; its full sequence is Phosphoglucosamine mutase (458 aa).

Residue Ser-100 is the Phosphoserine intermediate of the active site. Residues Ser-100, Asp-254, Asp-256, and Asp-258 each contribute to the Mg(2+) site. Position 100 is a phosphoserine (Ser-100).

It belongs to the phosphohexose mutase family. Requires Mg(2+) as cofactor. Post-translationally, activated by phosphorylation.

The enzyme catalyses alpha-D-glucosamine 1-phosphate = D-glucosamine 6-phosphate. Catalyzes the conversion of glucosamine-6-phosphate to glucosamine-1-phosphate. The sequence is that of Phosphoglucosamine mutase from Nocardia farcinica (strain IFM 10152).